The sequence spans 116 residues: Tyrosine-protein phosphatase 20 (116 aa).

The Tyrosine-protein phosphatase domain occupies 1–116 (WMMIVEQKCR…EIGGDAPMVV (116 aa)). Aspartate 84 contacts substrate.

The protein belongs to the protein-tyrosine phosphatase family.

It catalyses the reaction O-phospho-L-tyrosyl-[protein] + H2O = L-tyrosyl-[protein] + phosphate. This Styela plicata (Wrinkled sea squirt) protein is Tyrosine-protein phosphatase 20 (STY-20).